A 392-amino-acid chain; its full sequence is Formate-dependent phosphoribosylglycinamide formyltransferase (392 aa).

Residues 22 to 23 (EL) and Glu-82 contribute to the N(1)-(5-phospho-beta-D-ribosyl)glycinamide site. Residues Arg-114, Lys-155, 160–165 (SSGHGQ), 195–198 (EGFI), and Glu-203 contribute to the ATP site. The region spanning 119-307 (RLAAEELGLK…QFALHARAIL (189 aa)) is the ATP-grasp domain. Glu-266 and Glu-278 together coordinate Mg(2+). N(1)-(5-phospho-beta-D-ribosyl)glycinamide contacts are provided by residues Asp-285, Lys-355, and 362–363 (RR).

The protein belongs to the PurK/PurT family. As to quaternary structure, homodimer.

Its subcellular location is the cell inner membrane. The enzyme catalyses N(1)-(5-phospho-beta-D-ribosyl)glycinamide + formate + ATP = N(2)-formyl-N(1)-(5-phospho-beta-D-ribosyl)glycinamide + ADP + phosphate + H(+). It functions in the pathway purine metabolism; IMP biosynthesis via de novo pathway; N(2)-formyl-N(1)-(5-phospho-D-ribosyl)glycinamide from N(1)-(5-phospho-D-ribosyl)glycinamide (formate route): step 1/1. Its function is as follows. Involved in the de novo purine biosynthesis. Catalyzes the transfer of formate to 5-phospho-ribosyl-glycinamide (GAR), producing 5-phospho-ribosyl-N-formylglycinamide (FGAR). Formate is provided by PurU via hydrolysis of 10-formyl-tetrahydrofolate. The protein is Formate-dependent phosphoribosylglycinamide formyltransferase of Mannheimia haemolytica (Pasteurella haemolytica).